The following is a 326-amino-acid chain: MTFGIEFVPSDPVLKIAHYAKLAEQQGFDNVWITDHYNNRDVYSTLTVLAMNTNSIKLGTGVTNPYTRNAAITASSIGSLNEISGGRAILGLGPGEQATFDAMGISWEQPLTTTKESIAAIRGFLAGEKVTMDGDMIKFGGAKMAFKAGDVPIYMGAQGPKMLELAGEVSDGVLINASHPKDFEVAVKQIAAGAKKAGRDPKEVDVAAYACFSIDKDAAKAKSAAQIVVAFIVAGSPDMVLERHGIDPAAKADIGGAIAKGDFGALMGGMVTDSMMDAFSICGTPDDCKARINELLDIGVTQIVAGSPIGPNKEKAIKLIGKEIIG.

The protein belongs to the mer family.

It localises to the cytoplasm. It catalyses the reaction 5-methyl-5,6,7,8-tetrahydromethanopterin + oxidized coenzyme F420-(gamma-L-Glu)(n) + H(+) = 5,10-methylenetetrahydromethanopterin + reduced coenzyme F420-(gamma-L-Glu)(n). The protein operates within one-carbon metabolism; methanogenesis from CO(2); methyl-coenzyme M from 5,10-methylene-5,6,7,8-tetrahydromethanopterin: step 1/2. In terms of biological role, catalyzes the reversible reduction of methylene-H(4)MPT to methyl-H(4)MPT. This is 5,10-methylenetetrahydromethanopterin reductase from Methanolobus tindarius.